The sequence spans 82 residues: RGVCTRVYTTTPKKPNSALXKVCRIRLTNGFEVTSYIGGEGHNLQEHSVVLIRGGRVKDLPGVRYHTVRGALDCASVKDRKQ.

Aspartate 59 is modified (3-methylthioaspartic acid).

It belongs to the universal ribosomal protein uS12 family. Part of the 30S ribosomal subunit. Contacts proteins S8 and S17. May interact with IF1 in the 30S initiation complex.

Its function is as follows. With S4 and S5 plays an important role in translational accuracy. In terms of biological role, interacts with and stabilizes bases of the 16S rRNA that are involved in tRNA selection in the A site and with the mRNA backbone. Located at the interface of the 30S and 50S subunits, it traverses the body of the 30S subunit contacting proteins on the other side and probably holding the rRNA structure together. The combined cluster of proteins S8, S12 and S17 appears to hold together the shoulder and platform of the 30S subunit. The sequence is that of Small ribosomal subunit protein uS12 (rpsL) from Actinobacillus pleuropneumoniae (Haemophilus pleuropneumoniae).